Reading from the N-terminus, the 160-residue chain is Major allergen Pru av 1 (160 aa).

This sequence belongs to the BetVI family.

In Prunus avium (Cherry), this protein is Major allergen Pru av 1 (PRUA1).